A 171-amino-acid polypeptide reads, in one-letter code: MLP-like protein 31 (171 aa).

Belongs to the MLP family.

The protein is MLP-like protein 31 (MLP31) of Arabidopsis thaliana (Mouse-ear cress).